The sequence spans 115 residues: Evasin P1181 (115 aa).

A signal peptide spans 1–25 (MALNWSFRVIFVSAMWCALLKFATL). Intrachain disulfides connect C38/C58, C54/C94, C70/C99, and C89/C108. N-linked (GlcNAc...) asparagine glycans are attached at residues N45, N72, and N103.

The protein resides in the secreted. Salivary chemokine-binding protein which binds to host chemokines CCL3 and CCL4. In Amblyomma maculatum (Gulf Coast tick), this protein is Evasin P1181.